The primary structure comprises 124 residues: Small ribosomal subunit protein bS6 (124 aa).

The interval K93–S124 is disordered. Positions T105–Q115 are enriched in basic and acidic residues.

The protein belongs to the bacterial ribosomal protein bS6 family.

Functionally, binds together with bS18 to 16S ribosomal RNA. This is Small ribosomal subunit protein bS6 from Variovorax paradoxus (strain S110).